Reading from the N-terminus, the 885-residue chain is MSGSLNSRWVVQVSLTIINIIGFLVFLRGFFPSKVVLPGFNSFQDSTKSPFSDQYGNPQFNKFILMVVDAMRSDFCFSDRSNFSFLHQLINQGRALPFTAFSNPPTVTLPRLKGITTGGTPNFLDAILNVADDQDDSQGLHNQDSWVHQFRHSNNKTINFFGDDTWLKLFQDQFTEFEGTNSFFVSDFTEVDNNVTRHLDDQLSSNKWDGLILHYLGLDHIGHKGGPESPYMKPKQIEMDKILQRLYTYVTKNDDTLIVLMGDHGMNEIGNHGGSSPGETSAALSFISPKFNHKGESPLPYNSDYSYHHKISQIDLVPTLAALLNFPIPKNSLGVIAKEILEIWPENQRIKILLENCAQIMNLYEAKYGPSGKVWSQWENLQAKQHPIADYYEFLQDIQSEMASSATNYGYKDIYAGALILVITALAVIVVFNRYFLTASNMNISSVMFYELFVVLYSLHFHGSSLIEEEHQIWYFFTTATLLFLAITFFDTFKSLQNFISFGVLFACIRFMRSWNNSGQKYSSQYNIAYYLSHSNPNLMWGLIILTYFVLTLCIYIQGSLVPTFAFSFGKRLPDVKDPGGLISFIVVFVATSVSFSFKLLQYYIDGNTIPKWLNRFLLWIIESHHIDLSSATLEDNELKFQLQSVSIQLSKFTTIILLLLVISRVIIGKIRKIRYGTITDITNIMTIYLIHQTRHENIPIFLALMFAKFALSKLIYRKTNRIDQYILTVTMTVLCLQNLTFFCMGNTNSLATVDLSNAYNGVKAYNVFLVGLLTFVSNFAGPIFWSLSGLQLLYEPSLLNFNGPATTDLLHYTGLKKSILLVKSLISLFFYTVSAVNLVGSCINLRFHLFIWTVFSPKLLFFGSWILFVNVLIDLILAVIVLLF.

3 N-linked (GlcNAc...) asparagine glycosylation sites follow: N82, N155, and N194. Residues 413-433 form a helical membrane-spanning segment; sequence DIYAGALILVITALAVIVVFN. An N-linked (GlcNAc...) asparagine glycan is attached at N443. 3 helical membrane-spanning segments follow: residues 447-467, 473-493, and 495-514; these read VMFYELFVVLYSLHFHGSSLI, IWYFFTTATLLFLAITFFDTF, and SLQNFISFGVLFACIRFMRS. N-linked (GlcNAc...) asparagine glycosylation is present at N516. 8 consecutive transmembrane segments (helical) span residues 539 to 559, 581 to 601, 648 to 668, 697 to 717, 726 to 746, 768 to 788, 820 to 840, and 865 to 885; these read LMWGLIILTYFVLTLCIYIQG, GLISFIVVFVATSVSFSFKLL, IQLSKFTTIILLLLVISRVII, ENIPIFLALMFAKFALSKLIY, YILTVTMTVLCLQNLTFFCMG, VFLVGLLTFVSNFAGPIFWSL, ILLVKSLISLFFYTVSAVNLV, and SWILFVNVLIDLILAVIVLLF.

It belongs to the PIGG/PIGN/PIGO family. PIGG subfamily.

It localises to the endoplasmic reticulum membrane. Its pathway is glycolipid biosynthesis; glycosylphosphatidylinositol-anchor biosynthesis. Functionally, ethanolamine phosphate transferase involved in glycosylphosphatidylinositol-anchor biosynthesis. Transfers ethanolamine phosphate to the GPI second mannose. In Candida albicans (strain SC5314 / ATCC MYA-2876) (Yeast), this protein is GPI ethanolamine phosphate transferase 2 (GPI7).